The chain runs to 123 residues: Protein Wnt-7 (123 aa).

Residue serine 1 is the site of O-palmitoleoyl serine; by PORCN attachment. Cysteine 89 and cysteine 104 are disulfide-bonded. Asparagine 90 carries an N-linked (GlcNAc...) asparagine glycan.

Belongs to the Wnt family. In terms of processing, palmitoleoylation is required for efficient binding to frizzled receptors. Depalmitoleoylation leads to Wnt signaling pathway inhibition.

The protein resides in the secreted. It is found in the extracellular space. The protein localises to the extracellular matrix. In terms of biological role, ligand for members of the frizzled family of seven transmembrane receptors. Probable developmental protein. May be a signaling molecule which affects the development of discrete regions of tissues. Is likely to signal over only few cell diameters. In Evasterias troschelii (Mottled sea star), this protein is Protein Wnt-7 (WNT-7).